An 81-amino-acid polypeptide reads, in one-letter code: Fungal defensin micasin (81 aa).

A signal peptide spans 1–21; sequence MQFTKLATILLVSLMGSAAIA. The propeptide occupies 22 to 43; it reads APATNNAAVDAAADATPAVEKR. 3 disulfide bridges follow: C47–C68, C54–C76, and C58–C78.

This sequence belongs to the invertebrate defensin family.

It localises to the secreted. In terms of biological role, antibacterial peptide with potent activity against both Gram-positive and Gram-negative bacteria. May kill bacteria via an intracellular action mode to affect protein folding. Does not show effects on tested filamentous fungi or on the yeast S.cerevisiae. Does not act by destroying the membrane integrity, which is consistent with its nonamphiphilic architecture. Acts more rapidly than vancomycin, suggesting it does not act by inhibiting cell-wall biosynthesis. Does not cause hemolysis and has no cytotoxic effect on HEK cells. In vivo, is as efficient as vancomycin to protect mouse peritonitis models from S.aureus and P.aeruginosa infections. The sequence is that of Fungal defensin micasin from Arthroderma otae (Microsporum canis).